Consider the following 159-residue polypeptide: Cytochrome c-type biogenesis protein CcmE (159 aa).

The Cytoplasmic portion of the chain corresponds to 1–8 (MNLRRKNR). A helical; Signal-anchor for type II membrane protein transmembrane segment spans residues 9–29 (LWVVCAVLAGLALTTALVLYA). At 30–159 (LRANIDLFYT…PQRADKDTSS (130 aa)) the chain is on the periplasmic side. The segment at 129–159 (KHDENYTPPEVEKAMQENHRRPQRADKDTSS) is disordered. His130 and Tyr134 together coordinate heme.

Belongs to the CcmE/CycJ family.

The protein resides in the cell inner membrane. Heme chaperone required for the biogenesis of c-type cytochromes. Transiently binds heme delivered by CcmC and transfers the heme to apo-cytochromes in a process facilitated by CcmF and CcmH. The chain is Cytochrome c-type biogenesis protein CcmE from Salmonella paratyphi A (strain ATCC 9150 / SARB42).